We begin with the raw amino-acid sequence, 1299 residues long: Phosphoribosylformylglycinamidine synthase (1299 aa).

ATP-binding positions include 310 to 321, 389 to 391, and A680; these read GAATGAGGEIRD and TGY. Residues D681, E720, N724, and D888 each coordinate Mg(2+). S890 is a binding site for ATP. In terms of domain architecture, Glutamine amidotransferase type-1 spans 1046–1299; sequence VAVLREQGVN…MFRNARVWLG (254 aa). The active-site Nucleophile is the C1139. Residues H1264 and E1266 contribute to the active site.

The protein in the N-terminal section; belongs to the FGAMS family. In terms of assembly, monomer.

It is found in the cytoplasm. The enzyme catalyses N(2)-formyl-N(1)-(5-phospho-beta-D-ribosyl)glycinamide + L-glutamine + ATP + H2O = 2-formamido-N(1)-(5-O-phospho-beta-D-ribosyl)acetamidine + L-glutamate + ADP + phosphate + H(+). It functions in the pathway purine metabolism; IMP biosynthesis via de novo pathway; 5-amino-1-(5-phospho-D-ribosyl)imidazole from N(2)-formyl-N(1)-(5-phospho-D-ribosyl)glycinamide: step 1/2. In terms of biological role, phosphoribosylformylglycinamidine synthase involved in the purines biosynthetic pathway. Catalyzes the ATP-dependent conversion of formylglycinamide ribonucleotide (FGAR) and glutamine to yield formylglycinamidine ribonucleotide (FGAM) and glutamate. The protein is Phosphoribosylformylglycinamidine synthase of Myxococcus xanthus (strain DK1622).